The following is a 429-amino-acid chain: Serine--tRNA ligase (429 aa).

235–237 (TAE) lines the L-serine pocket. ATP is bound at residue 266–268 (RSE). Residue Glu-289 coordinates L-serine. 353–356 (EISS) contributes to the ATP binding site. Ser-389 is an L-serine binding site.

Belongs to the class-II aminoacyl-tRNA synthetase family. Type-1 seryl-tRNA synthetase subfamily. In terms of assembly, homodimer. The tRNA molecule binds across the dimer.

Its subcellular location is the cytoplasm. It catalyses the reaction tRNA(Ser) + L-serine + ATP = L-seryl-tRNA(Ser) + AMP + diphosphate + H(+). The catalysed reaction is tRNA(Sec) + L-serine + ATP = L-seryl-tRNA(Sec) + AMP + diphosphate + H(+). Its pathway is aminoacyl-tRNA biosynthesis; selenocysteinyl-tRNA(Sec) biosynthesis; L-seryl-tRNA(Sec) from L-serine and tRNA(Sec): step 1/1. Functionally, catalyzes the attachment of serine to tRNA(Ser). Is also able to aminoacylate tRNA(Sec) with serine, to form the misacylated tRNA L-seryl-tRNA(Sec), which will be further converted into selenocysteinyl-tRNA(Sec). This chain is Serine--tRNA ligase, found in Haemophilus influenzae (strain PittEE).